The primary structure comprises 666 residues: Envelope glycoprotein (666 aa).

The first 33 residues, 1-33 (MDRPALPKSIKDKTNPWGPIILGILIMLGGALG), serve as a signal peptide directing secretion. The receptor-binding domain (RBD) stretch occupies residues 31–264 (ALGKGSPHKV…KISDLGPRVP (234 aa)). The Extracellular portion of the chain corresponds to 34–607 (KGSPHKVFNL…FNRSPWLTTL (574 aa)). A glycan (N-linked (GlcNAc...) asparagine; by host) is linked at Asn-42. Disulfide bonds link Cys-76–Cys-127, Cys-102–Cys-116, Cys-103–Cys-112, Cys-150–Cys-170, and Cys-162–Cys-175. A Zn(2+)-binding site is contributed by Asp-115. Asn-197 is a glycosylation site (N-linked (GlcNAc...) asparagine; by host). Cys-207 and Cys-213 are oxidised to a cystine. The interval 265–310 (IGPNPVLSEQRPPSQPEPARLPPSSNLTQGGTPSAPTGPPQEGTGD) is disordered. Residues 287 to 299 (PSSNLTQGGTPSA) are compositionally biased toward polar residues. Residues Asn-290 and Asn-324 are each glycosylated (N-linked (GlcNAc...) asparagine; by host). Cystine bridges form between Cys-334–Cys-337, Cys-334–Cys-560, Cys-364–Cys-417, Cys-424–Cys-437, and Cys-552–Cys-560. Residues 334-337 (CWLC) carry the CXXC motif. 2 N-linked (GlcNAc...) asparagine; by host glycosylation sites follow: Asn-356 and Asn-363. The tract at residues 378-399 (TGKPLPRKGSQDPPGPVQYHSG) is disordered. A glycan (N-linked (GlcNAc...) asparagine; by host) is linked at Asn-431. The tract at residues 469-489 (VSLTLALLLGGLTMGGIAAGV) is fusion peptide. Residues 500-534 (QQFEQLHAAIQADLKEVESSITNLEKSLTSLSEVV) are a coiled coil. The immunosuppression stretch occupies residues 535 to 551 (LQNRRGLDLLFLEKGGL). The CX6CC motif lies at 552-560 (CAALKEECC). The chain crosses the membrane as a helical span at residues 608–628 (ISTIMGPLIILLLILMFGPCI). Cys-627 carries S-palmitoyl cysteine; by host lipidation. Residues 629–666 (LNRLVQFVKDRISVVQALVLTQQYHQLKPLEHGRAIVK) are Cytoplasmic-facing. The short motif at 652–655 (YHQL) is the YXXL motif; contains endocytosis signal element.

In terms of assembly, the mature envelope protein (Env) consists of a trimer of SU-TM heterodimers attached by a labile interchain disulfide bond. Specific enzymatic cleavages in vivo yield mature proteins. Envelope glycoproteins are synthesized as an inactive precursor that is N-glycosylated and processed likely by host cell furin or by a furin-like protease in the Golgi to yield the mature SU and TM proteins. The cleavage site between SU and TM requires the minimal sequence [KR]-X-[KR]-R. The R-peptide is released from the C-terminus of the cytoplasmic tail of the TM protein upon particle formation as a result of proteolytic cleavage by the viral protease. Cleavage of this peptide is required for TM to become fusogenic. In terms of processing, the CXXC motif is highly conserved across a broad range of retroviral envelope proteins. It is thought to participate in the formation of a labile disulfide bond possibly with the CX6CC motif present in the transmembrane protein. Isomerization of the intersubunit disulfide bond to an SU intrachain disulfide bond is thought to occur upon receptor recognition in order to allow membrane fusion. Post-translationally, the transmembrane protein is palmitoylated. The R-peptide is palmitoylated.

It is found in the virion membrane. Its subcellular location is the host cell membrane. Its function is as follows. The surface protein (SU) attaches the virus to the host cell by binding to its receptor. This interaction triggers the refolding of the transmembrane protein (TM) and is thought to activate its fusogenic potential by unmasking its fusion peptide. Fusion occurs at the host cell plasma membrane. In terms of biological role, the transmembrane protein (TM) acts as a class I viral fusion protein. Under the current model, the protein has at least 3 conformational states: pre-fusion native state, pre-hairpin intermediate state, and post-fusion hairpin state. During viral and target cell membrane fusion, the coiled coil regions (heptad repeats) assume a trimer-of-hairpins structure, positioning the fusion peptide in close proximity to the C-terminal region of the ectodomain. The formation of this structure appears to drive apposition and subsequent fusion of viral and target cell membranes. Membranes fusion leads to delivery of the nucleocapsid into the cytoplasm. The chain is Envelope glycoprotein (env) from Hortulanus murine leukemia virus (HoMuLV).